A 145-amino-acid chain; its full sequence is Deoxyuridine 5'-triphosphate nucleotidohydrolase (145 aa).

Substrate contacts are provided by residues 63-65 (RSG), glutamine 76, and 80-82 (TVD).

This sequence belongs to the dUTPase family. The cofactor is Mg(2+).

The catalysed reaction is dUTP + H2O = dUMP + diphosphate + H(+). The protein operates within pyrimidine metabolism; dUMP biosynthesis; dUMP from dCTP (dUTP route): step 2/2. Its function is as follows. This enzyme is involved in nucleotide metabolism: it produces dUMP, the immediate precursor of thymidine nucleotides and it decreases the intracellular concentration of dUTP so that uracil cannot be incorporated into DNA. This chain is Deoxyuridine 5'-triphosphate nucleotidohydrolase, found in Chlamydia muridarum (strain MoPn / Nigg).